The primary structure comprises 240 residues: 45 kDa antigen (240 aa).

Fibronectin type-III domains follow at residues 1-109 and 110-210; these read EFPD…FHTL and ANGT…KSGH.

The chain is 45 kDa antigen from Taenia ovis (Sheep tapeworm).